The following is a 308-amino-acid chain: Elongation factor Ts (308 aa).

An involved in Mg(2+) ion dislocation from EF-Tu region spans residues 80–83 (TDFV).

It belongs to the EF-Ts family.

It is found in the cytoplasm. Associates with the EF-Tu.GDP complex and induces the exchange of GDP to GTP. It remains bound to the aminoacyl-tRNA.EF-Tu.GTP complex up to the GTP hydrolysis stage on the ribosome. In Rhodopseudomonas palustris (strain ATCC BAA-98 / CGA009), this protein is Elongation factor Ts.